A 795-amino-acid polypeptide reads, in one-letter code: MIPVAEFKQFTEQQPAFKVLKPWWDVLAEYLTVAMLMIGVFGCTLQVTQDKIICLPSHESRENISGAPCQQLLPQGISEQMGGLRELSGLKNNLDLQQYSFINQLCYETALHWYAKYFPYLVVIHTLIFMVCTSFWFKFPGTSSKIEHFISILGKCFDSPWTTRALSEVSGENHKGPASGRAMVTTVTTTGAGSGKVGEGEKEKVLIEPEKVVSEPPVVTLLDKKEGEQAKALFEKVKKFRVHVEEGDILYSMYIRQTVLKVCKFFAILVYNLIYVEKISFLVACRVETSEITGYASFCCNHTKAHLFSKLAFCYISFVCVYGITCLYTLYWLFHRPLKEYSFRSVREETGMNDIPDVKNDFAFMLHLIDQYDSLYSKRFAVFLSEVSESRLKQLNLNHEWTPEKLRQKLQRNMRGRLELSLCMLPGLPDTVFELSEVEALRLEAICDISFPPGLSQLVNLQELSLLHSPARLPFSSQIFLRDRLKVICVKFEELREVPLWVFGLRGLEELHLEGLFPPEMARGATLESLRELKQLKVLSLRSNAGKVPASVTDVAGHLQRLSLHNDGARLLALNSLKKLAVLRELELVACGLERIPHAIFSLGALQELDLKDNHLRSIEEILSFQHCRKLVTLRLWHNQIAYVPEHVRKLRSLEQLYLSHNKLETLPTQLGQCFGLRLLDLSHNGLRSLPPELGLLQSLQHLALSYNALESLPDELFFCHKLRTLLLGYNHLTQLSPDVAALQALSRLELKGNRLETLPEELGDCKGLKKSGLLVEDTLYEGLPAEVREKMEEE.

Residues 1–22 (MIPVAEFKQFTEQQPAFKVLKP) are Cytoplasmic-facing. Residues 23-43 (WWDVLAEYLTVAMLMIGVFGC) form a helical membrane-spanning segment. At 44-116 (TLQVTQDKII…YETALHWYAK (73 aa)) the chain is on the extracellular side. A disulfide bond links C54 and C300. N-linked (GlcNAc...) asparagine glycosylation occurs at N63. A helical membrane pass occupies residues 117-137 (YFPYLVVIHTLIFMVCTSFWF). The Cytoplasmic portion of the chain corresponds to 138 to 264 (KFPGTSSKIE…IRQTVLKVCK (127 aa)). Residues 265–285 (FFAILVYNLIYVEKISFLVAC) traverse the membrane as a helical segment. The Extracellular portion of the chain corresponds to 286–312 (RVETSEITGYASFCCNHTKAHLFSKLA). N301 is a glycosylation site (N-linked (GlcNAc...) asparagine). Residues 313–333 (FCYISFVCVYGITCLYTLYWL) form a helical membrane-spanning segment. At 334–795 (FHRPLKEYSF…AEVREKMEEE (462 aa)) the chain is on the cytoplasmic side. 10 LRR repeats span residues 535–556 (QLKVLSLRSNAGKVPASVTDVA), 558–578 (HLQRLSLHNDGARLLALNSLK), 582–603 (VLRELELVACGLERIPHAIFSL), 605–626 (ALQELDLKDNHLRSIEEILSFQ), 630–651 (KLVTLRLWHNQIAYVPEHVRKL), 653–674 (SLEQLYLSHNKLETLPTQLGQC), 676–697 (GLRLLDLSHNGLRSLPPELGLL), 699–720 (SLQHLALSYNALESLPDELFFC), 722–744 (KLRTLLLGYNHLTQLSPDVAALQ), and 745–766 (ALSRLELKGNRLETLPEELGDC).

Belongs to the LRRC8 family. In terms of assembly, heterohexamer; oligomerizes with other LRRC8 proteins (LRRC8A, LRRC8C, LRRC8D and/or LRRC8B) to form a heterohexamer. In vivo, the subunit composition may depend primarily on expression levels, and heterooligomeric channels containing various proportions of the different LRRC8 proteins may coexist.

It is found in the cell membrane. Its subcellular location is the endoplasmic reticulum membrane. The protein resides in the lysosome membrane. It carries out the reaction chloride(in) = chloride(out). The catalysed reaction is iodide(out) = iodide(in). The enzyme catalyses taurine(out) = taurine(in). It catalyses the reaction 2',3'-cGAMP(out) = 2',3'-cGAMP(in). In terms of biological role, non-essential component of the volume-regulated anion channel (VRAC, also named VSOAC channel), an anion channel required to maintain a constant cell volume in response to extracellular or intracellular osmotic changes. The VRAC channel conducts iodide better than chloride and can also conduct organic osmolytes like taurine. Mediates efflux of amino acids, such as aspartate, in response to osmotic stress. The VRAC channel also mediates transport of immunoreactive cyclic dinucleotide GMP-AMP (2'-3'-cGAMP), an immune messenger produced in response to DNA virus in the cytosol. Channel activity requires LRRC8A plus at least one other family member (LRRC8B, LRRC8C, LRRC8D or LRRC8E); channel characteristics depend on the precise subunit composition. Also plays a role in lysosome homeostasis by forming functional lysosomal VRAC channels in response to low cytoplasmic ionic strength condition: lysosomal VRAC channels are necessary for the formation of large lysosome-derived vacuoles, which store and then expel excess water to maintain cytosolic water homeostasis. The sequence is that of Volume-regulated anion channel subunit LRRC8E from Mus musculus (Mouse).